We begin with the raw amino-acid sequence, 384 residues long: Histidinol-phosphate aminotransferase (384 aa).

N6-(pyridoxal phosphate)lysine is present on K223.

Belongs to the class-II pyridoxal-phosphate-dependent aminotransferase family. The cofactor is pyridoxal 5'-phosphate.

The enzyme catalyses L-histidinol phosphate + 2-oxoglutarate = 3-(imidazol-4-yl)-2-oxopropyl phosphate + L-glutamate. Its pathway is amino-acid biosynthesis; L-histidine biosynthesis; L-histidine from 5-phospho-alpha-D-ribose 1-diphosphate: step 7/9. This chain is Histidinol-phosphate aminotransferase (his3), found in Schizosaccharomyces pombe (strain 972 / ATCC 24843) (Fission yeast).